A 40-amino-acid polypeptide reads, in one-letter code: Dihydrolipoyl dehydrogenase (40 aa).

36 to 40 contributes to the FAD binding site; that stretch reads EKRGT.

This sequence belongs to the class-I pyridine nucleotide-disulfide oxidoreductase family. In terms of assembly, homodimer. FAD is required as a cofactor.

The protein resides in the mitochondrion matrix. The catalysed reaction is N(6)-[(R)-dihydrolipoyl]-L-lysyl-[protein] + NAD(+) = N(6)-[(R)-lipoyl]-L-lysyl-[protein] + NADH + H(+). In terms of biological role, lipoamide dehydrogenase is a component of the glycine cleavage system as well as of the alpha-ketoacid dehydrogenase complexes. The pyruvate dehydrogenase complex contains multiple copies of three enzymatic components: pyruvate dehydrogenase (E1), dihydrolipoamide acetyltransferase (E2) and lipoamide dehydrogenase (E3). This chain is Dihydrolipoyl dehydrogenase, found in Solanum tuberosum (Potato).